The following is a 592-amino-acid chain: Aspartate--tRNA ligase (592 aa).

Glu-171 lines the L-aspartate pocket. The tract at residues 195 to 198 is aspartate; that stretch reads QLFK. Arg-217 is a binding site for L-aspartate. ATP is bound by residues 217 to 219 and Gln-226; that span reads RDE. Residue His-448 participates in L-aspartate binding. Glu-482 lines the ATP pocket. Position 489 (Arg-489) interacts with L-aspartate. ATP is bound at residue 534 to 537; sequence GLDR.

Belongs to the class-II aminoacyl-tRNA synthetase family. Type 1 subfamily. As to quaternary structure, homodimer.

The protein resides in the cytoplasm. The enzyme catalyses tRNA(Asp) + L-aspartate + ATP = L-aspartyl-tRNA(Asp) + AMP + diphosphate. Catalyzes the attachment of L-aspartate to tRNA(Asp) in a two-step reaction: L-aspartate is first activated by ATP to form Asp-AMP and then transferred to the acceptor end of tRNA(Asp). This chain is Aspartate--tRNA ligase, found in Vibrio vulnificus (strain YJ016).